A 307-amino-acid polypeptide reads, in one-letter code: Acetaldehyde dehydrogenase (307 aa).

Catalysis depends on Cys-131, which acts as the Acyl-thioester intermediate. Residues 162–170 (SIGPGTRKN) and Asn-273 contribute to the NAD(+) site.

Belongs to the acetaldehyde dehydrogenase family.

The catalysed reaction is acetaldehyde + NAD(+) + CoA = acetyl-CoA + NADH + H(+). The protein is Acetaldehyde dehydrogenase (nahO) of Stutzerimonas stutzeri (Pseudomonas stutzeri).